The sequence spans 213 residues: Ribonuclease T (213 aa).

The 175-residue stretch at 28 to 202 (VVVDVETGGF…YDTEQTARLF (175 aa)) folds into the Exonuclease domain. Residues Asp-31, Glu-33, His-189, and Asp-194 each coordinate Mg(2+). The Proton donor/acceptor role is filled by His-189.

Belongs to the RNase T family. In terms of assembly, homodimer. Mg(2+) serves as cofactor.

Its function is as follows. Trims short 3' overhangs of a variety of RNA species, leaving a one or two nucleotide 3' overhang. Responsible for the end-turnover of tRNA: specifically removes the terminal AMP residue from uncharged tRNA (tRNA-C-C-A). Also appears to be involved in tRNA biosynthesis. This chain is Ribonuclease T, found in Xanthomonas euvesicatoria pv. vesicatoria (strain 85-10) (Xanthomonas campestris pv. vesicatoria).